The following is a 473-amino-acid chain: UDP-glycosyltransferase 91D2 (473 aa).

The active-site Proton acceptor is histidine 26. Histidine 26 serves as a coordination point for an anthocyanidin. Aspartate 121 serves as the catalytic Charge relay. UDP-alpha-D-glucose is bound by residues alanine 344, glutamine 346, histidine 361, serine 366, and glutamate 369. Glycine 384 is an an anthocyanidin binding site. Residues aspartate 385 and glutamine 386 each coordinate UDP-alpha-D-glucose.

The protein belongs to the UDP-glycosyltransferase family.

The catalysed reaction is steviolmonoside + UDP-alpha-D-glucose = steviolbioside + UDP + H(+). It catalyses the reaction rubusoside + UDP-alpha-D-glucose = stevioside + UDP + H(+). It carries out the reaction stevioside + UDP-alpha-D-glucose = rebaudioside E + UDP + H(+). The enzyme catalyses rebaudioside A + UDP-alpha-D-glucose = rebaudioside D + UDP + H(+). Its function is as follows. Involved in the biosynthesis of steviol glycosides in leaves. Converts the mono-glycoside steviolmonoside to the bi-glycoside steviolbioside. Converts the bi-glycoside rubusoside to the tri-glycoside stevioside. Converts the tri-glycoside stevioside to the tetra-glycoside rebaudioside E. Converts the tetra-glycoside rebaudioside A to the penta-glycoside rebaudioside E. The sequence is that of UDP-glycosyltransferase 91D2 from Stevia rebaudiana (Stevia).